The primary structure comprises 203 residues: 2-hydroxychromene-2-carboxylate isomerase (203 aa).

Catalysis depends on serine 11, which acts as the Nucleophile. Serine 11 is a binding site for glutathione. Residues lysine 43, 53–54 (NR), and tyrosine 84 each bind substrate. Residues valine 168 and 179 to 182 (WGND) each bind glutathione.

Belongs to the GST superfamily. NadH family. Glutathione serves as cofactor.

It catalyses the reaction 2-hydroxychromene-2-carboxylate = (3E)-4-(2-hydroxyphenyl)-2-oxobut-3-enoate. The protein operates within aromatic compound metabolism; naphthalene degradation. Involved in the naphthalene catabolic pathway. Catalyzes the reversible glutathione-dependent isomerization of 2-hydroxychromene-2-carboxylate (HCCA) to trans-O-hydroxybenzylidenepyruvate (THBPA). This chain is 2-hydroxychromene-2-carboxylate isomerase (nahD), found in Pseudomonas putida (Arthrobacter siderocapsulatus).